A 99-amino-acid polypeptide reads, in one-letter code: Malonate decarboxylase acyl carrier protein (99 aa).

Ser-25 is subject to O-(phosphoribosyl dephospho-coenzyme A)serine.

This sequence belongs to the MdcC family. In terms of processing, covalently binds the prosthetic group of malonate decarboxylase.

The protein localises to the cytoplasm. In terms of biological role, subunit of malonate decarboxylase, it is an acyl carrier protein to which acetyl and malonyl thioester residues are bound via a 2'-(5''-phosphoribosyl)-3'-dephospho-CoA prosthetic group and turn over during the catalytic mechanism. In Pseudomonas putida (Arthrobacter siderocapsulatus), this protein is Malonate decarboxylase acyl carrier protein.